Here is a 137-residue protein sequence, read N- to C-terminus: Nucleoside diphosphate kinase (137 aa).

Residues Lys-10, Phe-58, Arg-86, Thr-92, Arg-103, and Asn-113 each coordinate ATP. Residue His-116 is the Pros-phosphohistidine intermediate of the active site.

The protein belongs to the NDK family. As to quaternary structure, homotetramer. The cofactor is Mg(2+).

Its subcellular location is the cytoplasm. It catalyses the reaction a 2'-deoxyribonucleoside 5'-diphosphate + ATP = a 2'-deoxyribonucleoside 5'-triphosphate + ADP. The enzyme catalyses a ribonucleoside 5'-diphosphate + ATP = a ribonucleoside 5'-triphosphate + ADP. Major role in the synthesis of nucleoside triphosphates other than ATP. The ATP gamma phosphate is transferred to the NDP beta phosphate via a ping-pong mechanism, using a phosphorylated active-site intermediate. The protein is Nucleoside diphosphate kinase of Helicobacter pylori (strain G27).